We begin with the raw amino-acid sequence, 170 residues long: Probable calcium-binding protein CML27 (170 aa).

Position 2 is an N-acetylalanine (Ala-2). EF-hand domains follow at residues 19–54 (ANPE…MGTS), 55–85 (YTET…TLCR), 88–123 (SSAA…LGMS), and 136–159 (VDAD…SSLL). Residues Asp-32, Asn-34, Asp-36, Lys-38, Glu-43, Asp-68, Asp-70, Asp-72, Tyr-74, Glu-79, Asp-101, Asp-103, Asn-105, Glu-112, Asp-137, Asp-139, Asp-141, Asn-143, and Glu-148 each coordinate Ca(2+).

Potential calcium sensor. The polypeptide is Probable calcium-binding protein CML27 (CML27) (Arabidopsis thaliana (Mouse-ear cress)).